The chain runs to 142 residues: Hemoglobin subunit alpha (142 aa).

An N-acetylserine modification is found at Ser1. The region spanning 1–142 (SLSDKDKAVV…LALALSEKYR (142 aa)) is the Globin domain. His59 lines the O2 pocket. Residue His88 participates in heme b binding.

This sequence belongs to the globin family. Heterotetramer of two alpha chains and two beta chains. In terms of tissue distribution, red blood cells.

Functionally, involved in oxygen transport from gills to the various peripheral tissues. The chain is Hemoglobin subunit alpha (hba) from Carassius auratus (Goldfish).